The following is a 313-amino-acid chain: Aspartate carbamoyltransferase catalytic subunit (313 aa).

Carbamoyl phosphate-binding residues include Arg58 and Thr59. An L-aspartate-binding site is contributed by Lys86. Arg108, His136, and Gln139 together coordinate carbamoyl phosphate. L-aspartate is bound by residues Arg169 and Arg223. Carbamoyl phosphate-binding residues include Gly265 and Pro266.

The protein belongs to the aspartate/ornithine carbamoyltransferase superfamily. ATCase family. In terms of assembly, heterododecamer (2C3:3R2) of six catalytic PyrB chains organized as two trimers (C3), and six regulatory PyrI chains organized as three dimers (R2).

The enzyme catalyses carbamoyl phosphate + L-aspartate = N-carbamoyl-L-aspartate + phosphate + H(+). It participates in pyrimidine metabolism; UMP biosynthesis via de novo pathway; (S)-dihydroorotate from bicarbonate: step 2/3. Its function is as follows. Catalyzes the condensation of carbamoyl phosphate and aspartate to form carbamoyl aspartate and inorganic phosphate, the committed step in the de novo pyrimidine nucleotide biosynthesis pathway. This is Aspartate carbamoyltransferase catalytic subunit from Anaeromyxobacter sp. (strain K).